A 127-amino-acid polypeptide reads, in one-letter code: Egg cell-secreted protein 1.4 (127 aa).

Positions 1–25 are cleaved as a signal peptide; it reads MASNTTFLFSTVTLLIILLNTTVSG.

This sequence belongs to the plant egg cell-secreted peptide family. Restricted to female reproductive tissues, specifically accumulating in storage vesicles of the unfertilized egg cell.

It localises to the cytoplasmic vesicle. The protein resides in the secreted. Involved in the regulation of gamete interactions during the double fertilization and to prevent multiple-pollen tube attraction; mediates the redistribution of the gamete fusogen HAP2/GCS1 to the cell surface after secretion upon sperm arrival. This is Egg cell-secreted protein 1.4 (EC1.4) from Arabidopsis thaliana (Mouse-ear cress).